Here is a 552-residue protein sequence, read N- to C-terminus: Methyl-coenzyme M reductase II subunit alpha (552 aa).

Gln150 contributes to the coenzyme F430 binding site. Coenzyme B-binding positions include Arg228, 259–260 (KH), and Arg273. Coenzyme M contacts are provided by Tyr335 and Tyr446.

This sequence belongs to the methyl-coenzyme M reductase alpha subunit family. As to quaternary structure, MCR is a hexamer of two alpha, two beta, and two gamma chains, forming a dimer of heterotrimers. Coenzyme F430 serves as cofactor.

It carries out the reaction coenzyme B + methyl-coenzyme M = methane + coenzyme M-coenzyme B heterodisulfide. It functions in the pathway one-carbon metabolism; methyl-coenzyme M reduction; methane from methyl-coenzyme M: step 1/1. Component of the methyl-coenzyme M reductase (MCR) I that catalyzes the reductive cleavage of methyl-coenzyme M (CoM-S-CH3 or 2-(methylthio)ethanesulfonate) using coenzyme B (CoB or 7-mercaptoheptanoylthreonine phosphate) as reductant which results in the production of methane and the mixed heterodisulfide of CoB and CoM (CoM-S-S-CoB). This is the final step in methanogenesis. This Methanocaldococcus jannaschii (strain ATCC 43067 / DSM 2661 / JAL-1 / JCM 10045 / NBRC 100440) (Methanococcus jannaschii) protein is Methyl-coenzyme M reductase II subunit alpha (mrtA).